A 242-amino-acid chain; its full sequence is 4-hydroxy-tetrahydrodipicolinate reductase (242 aa).

Residues 8–13 (GAKGRM), 75–77 (GTT), and 99–102 (ATNM) contribute to the NAD(+) site. Histidine 131 serves as the catalytic Proton donor/acceptor. Residue histidine 132 participates in (S)-2,3,4,5-tetrahydrodipicolinate binding. Catalysis depends on lysine 135, which acts as the Proton donor. A (S)-2,3,4,5-tetrahydrodipicolinate-binding site is contributed by 141 to 142 (GT).

The protein belongs to the DapB family.

The protein localises to the cytoplasm. It carries out the reaction (S)-2,3,4,5-tetrahydrodipicolinate + NAD(+) + H2O = (2S,4S)-4-hydroxy-2,3,4,5-tetrahydrodipicolinate + NADH + H(+). The enzyme catalyses (S)-2,3,4,5-tetrahydrodipicolinate + NADP(+) + H2O = (2S,4S)-4-hydroxy-2,3,4,5-tetrahydrodipicolinate + NADPH + H(+). It participates in amino-acid biosynthesis; L-lysine biosynthesis via DAP pathway; (S)-tetrahydrodipicolinate from L-aspartate: step 4/4. Functionally, catalyzes the conversion of 4-hydroxy-tetrahydrodipicolinate (HTPA) to tetrahydrodipicolinate. This Campylobacter jejuni subsp. jejuni serotype O:6 (strain 81116 / NCTC 11828) protein is 4-hydroxy-tetrahydrodipicolinate reductase.